The sequence spans 162 residues: NADH-quinone oxidoreductase subunit I (162 aa).

2 consecutive 4Fe-4S ferredoxin-type domains span residues 52–82 and 93–122; these read LRRY…IEAG and VRYD…EGPN. Residues C62, C65, C68, C72, C102, C105, C108, and C112 each coordinate [4Fe-4S] cluster.

It belongs to the complex I 23 kDa subunit family. NDH-1 is composed of 14 different subunits. Subunits NuoA, H, J, K, L, M, N constitute the membrane sector of the complex. It depends on [4Fe-4S] cluster as a cofactor.

Its subcellular location is the cell inner membrane. The catalysed reaction is a quinone + NADH + 5 H(+)(in) = a quinol + NAD(+) + 4 H(+)(out). Functionally, NDH-1 shuttles electrons from NADH, via FMN and iron-sulfur (Fe-S) centers, to quinones in the respiratory chain. The immediate electron acceptor for the enzyme in this species is believed to be ubiquinone. Couples the redox reaction to proton translocation (for every two electrons transferred, four hydrogen ions are translocated across the cytoplasmic membrane), and thus conserves the redox energy in a proton gradient. This Bradyrhizobium sp. (strain BTAi1 / ATCC BAA-1182) protein is NADH-quinone oxidoreductase subunit I.